The following is a 500-amino-acid chain: Histidine--tRNA ligase (500 aa).

Belongs to the class-II aminoacyl-tRNA synthetase family. Homodimer.

The protein localises to the cytoplasm. The enzyme catalyses tRNA(His) + L-histidine + ATP = L-histidyl-tRNA(His) + AMP + diphosphate + H(+). The protein is Histidine--tRNA ligase (hisS) of Mesorhizobium japonicum (strain LMG 29417 / CECT 9101 / MAFF 303099) (Mesorhizobium loti (strain MAFF 303099)).